A 547-amino-acid chain; its full sequence is Mercuric reductase (547 aa).

The region spanning 5 to 70 (APTELAITGM…AVVASGYGVH (66 aa)) is the HMA domain. A metal cation is bound by residues cysteine 16 and cysteine 19. Positions 96 and 121 each coordinate FAD. Cysteine 122 and cysteine 127 are joined by a disulfide. Positions 131, 197, 389, and 397 each coordinate FAD. Residues cysteine 544 and cysteine 545 each contribute to the Hg(2+) site.

This sequence belongs to the class-I pyridine nucleotide-disulfide oxidoreductase family. Homodimer. The cofactor is FAD.

The enzyme catalyses Hg + NADP(+) + H(+) = Hg(2+) + NADPH. Its function is as follows. Resistance to Hg(2+) in bacteria appears to be governed by a specialized system which includes mercuric reductase. MerA protein is responsible for volatilizing mercury as Hg(0). This chain is Mercuric reductase (merA), found in Acidithiobacillus ferrooxidans (Thiobacillus ferrooxidans).